The following is a 309-amino-acid chain: NADH-quinone oxidoreductase subunit C (309 aa).

The interval 198 to 309 is disordered; that stretch reads LPGDEKAVPP…RTRKKKEDGE (112 aa). A compositionally biased stretch (basic and acidic residues) spans 220 to 230; that stretch reads TKGDAKADVPK. Residues 246 to 261 are compositionally biased toward low complexity; the sequence is DAAAKPVAEAAAPAAT.

It belongs to the complex I 30 kDa subunit family. As to quaternary structure, NDH-1 is composed of 14 different subunits. Subunits NuoB, C, D, E, F, and G constitute the peripheral sector of the complex.

Its subcellular location is the cell inner membrane. It carries out the reaction a quinone + NADH + 5 H(+)(in) = a quinol + NAD(+) + 4 H(+)(out). Its function is as follows. NDH-1 shuttles electrons from NADH, via FMN and iron-sulfur (Fe-S) centers, to quinones in the respiratory chain. The immediate electron acceptor for the enzyme in this species is believed to be ubiquinone. Couples the redox reaction to proton translocation (for every two electrons transferred, four hydrogen ions are translocated across the cytoplasmic membrane), and thus conserves the redox energy in a proton gradient. The polypeptide is NADH-quinone oxidoreductase subunit C (Novosphingobium aromaticivorans (strain ATCC 700278 / DSM 12444 / CCUG 56034 / CIP 105152 / NBRC 16084 / F199)).